A 335-amino-acid polypeptide reads, in one-letter code: E3 ubiquitin-protein ligase NLA (335 aa).

The 154-residue stretch at 1-154 (MKFCKKYEEY…ESRQGQAFKT (154 aa)) folds into the SPX domain. The RING-type zinc finger occupies 231 to 280 (CSICLDTVFDPISLTCGHIYCYMCACSAASVNVVDGLKTAEATEKCPLCR).

As to quaternary structure, interacts with UBC8. Interacts with PHT1-1 and PHT1-4. Forms homodimers (via RING domain). Interacts with UBC24/PHO2. Interacts with NPF2.13/NRT1.7. Interacts with NAC92/ORE1. High expression in roots and stems, medium in seedlings, flowers, rosette and cauline leaves, and very low in siliques. Detected in cotyledons, hypocotyls, pedicel, receptacle, pistil, sepal, filament of stamen and at the two ends of developing siliques.

The protein resides in the nucleus speckle. Its subcellular location is the nucleus. The protein localises to the cell membrane. It carries out the reaction S-ubiquitinyl-[E2 ubiquitin-conjugating enzyme]-L-cysteine + [acceptor protein]-L-lysine = [E2 ubiquitin-conjugating enzyme]-L-cysteine + N(6)-ubiquitinyl-[acceptor protein]-L-lysine.. The protein operates within protein modification; protein ubiquitination. Functionally, E3 ubiquitin-protein ligase that mediates E2-dependent protein ubiquitination. Plays a role in salicylic acid-mediated negative feedback regulation of salicylic acid (SA) accumulation. May be involved in the overall regulation of SA, benzoic acid and phenylpropanoid biosynthesis. Involved in defense response. May act as negative regulator of resistance to the necrotrophic fungal pathogen Plectosphaerella cucumerina by modulating the accumulation of the phytoalexin camalexin and the salicylic acid- and jasmonate- dependent defense pathways. Controls the adaptability to nitrogen limitation by channeling the phenylpropanoid metabolic flux to the induced anthocyanin synthesis. Involved in the regulation of inorganic phosphate (Pi) homeostasis in a nitrate-dependent fashion. Directs the ubiquitination and subsequent degradation of the plasma membrane-localized inorganic phosphate transporters PHT1-1 and PHT1-4, to maintain phosphate homeostasis. The ubiquitination of PHTs triggers their clathrin-dependent endocytosis and trafficking to the vacuole through the endosomal pathway for degradation. Functions cooperatively with UBC24/PHO2 to regulate the abundance of PHT1-1, PHT1-2 and PHT1-3 in different subcellular compartments. Regulates Pi homeostasis by mediating, cooperatively with UBC24/PHO2, polyubiquitination of PHT1-4 and its targeting for degradation. Directs the polyubiquitination and subsequent degradation of the plasma membrane-localized nitrate transporter NPF2.13/NRT1.7, to help plants to adapt to nitrogen deficiency by regulating the source-to-sink remobilization of nitrate. Regulates leaf senescence during nitrogen deficiency by mediating, cooperatively with UBC24/PHO2, polyubiquitination of NAC92/ORE1 and its targeting for degradation. In Arabidopsis thaliana (Mouse-ear cress), this protein is E3 ubiquitin-protein ligase NLA.